A 327-amino-acid polypeptide reads, in one-letter code: Methionyl-tRNA formyltransferase (327 aa).

S111–P114 is a binding site for (6S)-5,6,7,8-tetrahydrofolate.

It belongs to the Fmt family.

The catalysed reaction is L-methionyl-tRNA(fMet) + (6R)-10-formyltetrahydrofolate = N-formyl-L-methionyl-tRNA(fMet) + (6S)-5,6,7,8-tetrahydrofolate + H(+). Its function is as follows. Attaches a formyl group to the free amino group of methionyl-tRNA(fMet). The formyl group appears to play a dual role in the initiator identity of N-formylmethionyl-tRNA by promoting its recognition by IF2 and preventing the misappropriation of this tRNA by the elongation apparatus. The sequence is that of Methionyl-tRNA formyltransferase from Synechococcus elongatus (strain ATCC 33912 / PCC 7942 / FACHB-805) (Anacystis nidulans R2).